The following is a 331-amino-acid chain: Ferredoxin--NADP reductase (331 aa).

7 residues coordinate FAD: E34, Q42, Y47, V87, F121, D285, and T325.

This sequence belongs to the ferredoxin--NADP reductase type 2 family. In terms of assembly, homodimer. Requires FAD as cofactor.

It carries out the reaction 2 reduced [2Fe-2S]-[ferredoxin] + NADP(+) + H(+) = 2 oxidized [2Fe-2S]-[ferredoxin] + NADPH. This Lactiplantibacillus plantarum (strain ATCC BAA-793 / NCIMB 8826 / WCFS1) (Lactobacillus plantarum) protein is Ferredoxin--NADP reductase.